A 357-amino-acid chain; its full sequence is Cytoplasmic tRNA 2-thiolation protein 1 (357 aa).

A disordered region spans residues 314–348; it reads GVSRTRGRRGEKAGLHPDVGRGGGGGSSGPAEVAS. The segment covering 321 to 332 has biased composition (basic and acidic residues); sequence RRGEKAGLHPDV.

This sequence belongs to the TtcA family. CTU1/NCS6/ATPBD3 subfamily.

The protein localises to the cytoplasm. It participates in tRNA modification; 5-methoxycarbonylmethyl-2-thiouridine-tRNA biosynthesis. In terms of biological role, plays a central role in 2-thiolation of mcm(5)S(2)U at tRNA wobble positions of tRNA(Lys), tRNA(Glu) and tRNA(Gln). Directly binds tRNAs and probably acts by catalyzing adenylation of tRNAs, an intermediate required for 2-thiolation. It is unclear whether it acts as a sulfurtransferase that transfers sulfur from thiocarboxylated URM1 onto the uridine of tRNAs at wobble position. In Chlamydomonas reinhardtii (Chlamydomonas smithii), this protein is Cytoplasmic tRNA 2-thiolation protein 1.